Consider the following 361-residue polypeptide: Peptide chain release factor 1 (361 aa).

An N5-methylglutamine modification is found at Gln-237. The span at 284–296 shows a compositional bias: basic and acidic residues; the sequence is EDEKRRSEEDSTR. The tract at residues 284–305 is disordered; the sequence is EDEKRRSEEDSTRRNLVSSGDR.

It belongs to the prokaryotic/mitochondrial release factor family. Methylated by PrmC. Methylation increases the termination efficiency of RF1.

It is found in the cytoplasm. Its function is as follows. Peptide chain release factor 1 directs the termination of translation in response to the peptide chain termination codons UAG and UAA. The chain is Peptide chain release factor 1 from Shewanella piezotolerans (strain WP3 / JCM 13877).